The chain runs to 253 residues: Ubiquinone biosynthesis O-methyltransferase (253 aa).

4 residues coordinate S-adenosyl-L-methionine: arginine 47, glycine 78, aspartate 99, and methionine 141.

It belongs to the methyltransferase superfamily. UbiG/COQ3 family.

It carries out the reaction a 3-demethylubiquinol + S-adenosyl-L-methionine = a ubiquinol + S-adenosyl-L-homocysteine + H(+). The enzyme catalyses a 3-(all-trans-polyprenyl)benzene-1,2-diol + S-adenosyl-L-methionine = a 2-methoxy-6-(all-trans-polyprenyl)phenol + S-adenosyl-L-homocysteine + H(+). It functions in the pathway cofactor biosynthesis; ubiquinone biosynthesis. O-methyltransferase that catalyzes the 2 O-methylation steps in the ubiquinone biosynthetic pathway. The sequence is that of Ubiquinone biosynthesis O-methyltransferase from Bradyrhizobium diazoefficiens (strain JCM 10833 / BCRC 13528 / IAM 13628 / NBRC 14792 / USDA 110).